A 192-amino-acid chain; its full sequence is Ribosome maturation factor RimM (192 aa).

The 88-residue stretch at 99–186 (ADEYHVSELV…RIEIAPPPGL (88 aa)) folds into the PRC barrel domain.

Belongs to the RimM family. In terms of assembly, binds ribosomal protein uS19.

It localises to the cytoplasm. Functionally, an accessory protein needed during the final step in the assembly of 30S ribosomal subunit, possibly for assembly of the head region. Essential for efficient processing of 16S rRNA. May be needed both before and after RbfA during the maturation of 16S rRNA. It has affinity for free ribosomal 30S subunits but not for 70S ribosomes. This chain is Ribosome maturation factor RimM, found in Microcystis aeruginosa (strain NIES-843 / IAM M-2473).